The chain runs to 873 residues: Bifunctional levopimaradiene synthase, chloroplastic (873 aa).

The transit peptide at 1–59 (MAGVLFANLPCSLQLSPKVPFRQSTNILIPFHKRSSFGFNAQHCVRSHLRLRWNCVGIH) directs the protein to the chloroplast. Position 271 (lysine 271) interacts with substrate. Residues aspartate 405 and aspartate 407 each contribute to the Mg(2+) site. The DXDD motif signature appears at 405–408 (DVDD). Lysine 492 is a binding site for substrate. Aspartate 624, aspartate 628, asparagine 769, threonine 773, and glutamate 777 together coordinate Mg(2+). Residues 624-628 (DDLYD) carry the DDXXD motif motif.

It belongs to the terpene synthase family. Tpsd subfamily. It depends on Mg(2+) as a cofactor. Expressed in roots.

It is found in the plastid. The protein resides in the chloroplast. The catalysed reaction is (2E,6E,10E)-geranylgeranyl diphosphate = (+)-copalyl diphosphate. It carries out the reaction (+)-copalyl diphosphate = abieta-8(14),12-diene + diphosphate. The protein operates within terpene metabolism; ginkgolide biosynthesis. In terms of biological role, catalyzes the initial cyclization step in the biosynthesis of ginkgolides, a structurally unique family of diterpenoids that are highly specific platelet-activating-factor receptor antagonists. Bifunctional enzyme that catalyzes two sequential cyclizations of geranylgeranyl diphosphate (GGPP) to levopimaradiene. In Ginkgo biloba (Ginkgo), this protein is Bifunctional levopimaradiene synthase, chloroplastic (LPS).